A 1792-amino-acid polypeptide reads, in one-letter code: Protein TIC 214 (1792 aa).

Helical transmembrane passes span isoleucine 18–glycine 38, phenylalanine 64–leucine 84, proline 87–histidine 107, isoleucine 129–leucine 149, isoleucine 165–isoleucine 185, and isoleucine 221–phenylalanine 241.

This sequence belongs to the TIC214 family. As to quaternary structure, part of the Tic complex.

Its subcellular location is the plastid. The protein localises to the chloroplast inner membrane. Involved in protein precursor import into chloroplasts. May be part of an intermediate translocation complex acting as a protein-conducting channel at the inner envelope. This chain is Protein TIC 214, found in Glycine max (Soybean).